The sequence spans 78 residues: Chondrosarcoma-associated gene 1 protein (78 aa).

The N-terminal stretch at 1-19 (MSATTACWPAFTVLGEARG) is a signal peptide. The tract at residues 35 to 78 (KMSRKPRASSPFSNNHPSTPKRFPRQPRREKGPVKEVPGTKGSP) is disordered.

Expressed in chondrosarcoma, melanoma, cartilage and testis, but not in other normal tissues.

The protein localises to the cytoplasm. The protein resides in the cytoskeleton. It localises to the microtubule organizing center. Its subcellular location is the centrosome. It is found in the spindle pole. Functionally, may play an important role in maintaining centrosome integrity during mitosis. This Homo sapiens (Human) protein is Chondrosarcoma-associated gene 1 protein.